The following is a 772-amino-acid chain: Serine/threonine-protein kinase tousled-like 2 (772 aa).

Positions Gly24 to Gln126 are disordered. Residues Pro29 to Ser44 are compositionally biased toward polar residues. The span at Ser46–Arg61 shows a compositional bias: basic and acidic residues. Residues Ser73, Ser94, Ser99, Ser115, Ser117, and Ser134 each carry the phosphoserine modification. Positions Gln180–Thr208 are disordered. The tract at residues Asn225–Glu276 is required for interaction with TLK1 and DYNLL1/LC8. 2 coiled-coil regions span residues Asn225–Glu276 and Ala317–Pro347. Positions Leu342–Thr385 are disordered. Positions Thr367 to Thr380 are enriched in polar residues. Residues His403–Gln451 are a coiled coil. The Protein kinase domain maps to Tyr462–Leu741. ATP contacts are provided by residues Leu468 to Val476 and Lys491. Asp592 functions as the Proton acceptor in the catalytic mechanism. The residue at position 750 (Ser750) is a Phosphoserine; by CHEK1.

Belongs to the protein kinase superfamily. Ser/Thr protein kinase family. In terms of assembly, monomer. May form homodimers; homodimerization may enhance autophosphoylation and enzymatic activity. Heterodimer with TLK1. Interacts with YWHAZ; association with 14-3-3 proteins such as YWHAZ regulates subcellular location. May also interact with FEZ1/LZTS1 and FEZ2. Interacts with CHD7 and CHD8. Interacts with DYNLL1/LC8. It depends on Mg(2+) as a cofactor. In terms of processing, phosphorylated at Ser-750, probably by CHEK1. Autophosphorylated; phosphorylation promotes the assembly of higher order oligomers and enzymatic activity. As to expression, detected in placenta, fetal liver, kidney, pancreas, heart and skeletal muscle. Highly expressed in testis. Detected in spleen, thymus, colon, ovary, small intestine, prostate and peripheral blood leukocytes. Almost undetectable in liver and lung.

It localises to the nucleus. Its subcellular location is the nucleoplasm. The protein localises to the cytoplasm. It is found in the perinuclear region. The protein resides in the cytoskeleton. It catalyses the reaction L-seryl-[protein] + ATP = O-phospho-L-seryl-[protein] + ADP + H(+). The enzyme catalyses L-threonyl-[protein] + ATP = O-phospho-L-threonyl-[protein] + ADP + H(+). With respect to regulation, cell cycle-regulated, with maximal activity in the S-phase. Rapidly and transiently inhibited by phosphorylation following the generation of DNA double-stranded breaks during S-phase, probably by CHEK1, possibly at Ser-750. This inhibition is cell cycle checkpoint- and ATM-dependent. Its function is as follows. Serine/threonine-protein kinase involved in the process of chromatin assembly and probably also DNA replication, transcription, repair, and chromosome segregation. Phosphorylates the chromatin assembly factors ASF1A and ASF1B. Phosphorylation of ASF1A prevents its proteasome-mediated degradation, thereby enhancing chromatin assembly. Negative regulator of amino acid starvation-induced autophagy. The sequence is that of Serine/threonine-protein kinase tousled-like 2 from Homo sapiens (Human).